The chain runs to 151 residues: SsrA-binding protein (151 aa).

The disordered stretch occupies residues 132-151 (KRQTIKKRDQDREIHRKYGI).

The protein belongs to the SmpB family.

Its subcellular location is the cytoplasm. Its function is as follows. Required for rescue of stalled ribosomes mediated by trans-translation. Binds to transfer-messenger RNA (tmRNA), required for stable association of tmRNA with ribosomes. tmRNA and SmpB together mimic tRNA shape, replacing the anticodon stem-loop with SmpB. tmRNA is encoded by the ssrA gene; the 2 termini fold to resemble tRNA(Ala) and it encodes a 'tag peptide', a short internal open reading frame. During trans-translation Ala-aminoacylated tmRNA acts like a tRNA, entering the A-site of stalled ribosomes, displacing the stalled mRNA. The ribosome then switches to translate the ORF on the tmRNA; the nascent peptide is terminated with the 'tag peptide' encoded by the tmRNA and targeted for degradation. The ribosome is freed to recommence translation, which seems to be the essential function of trans-translation. This chain is SsrA-binding protein, found in Lactobacillus gasseri (strain ATCC 33323 / DSM 20243 / BCRC 14619 / CIP 102991 / JCM 1131 / KCTC 3163 / NCIMB 11718 / NCTC 13722 / AM63).